Here is a 388-residue protein sequence, read N- to C-terminus: P2X purinoceptor 4 (388 aa).

The Cytoplasmic portion of the chain corresponds to 1–33 (MTGCCTVLGAFLFEYDTPRIVLIRSRKVGLMNR). A helical transmembrane segment spans residues 34–54 (TVQLLILAYVIGWVFVWEKGY). Over 55-338 (QETDSVVSSV…KFDIIPTMIN (284 aa)) the chain is Extracellular. Lys67 and Lys69 together coordinate ATP. Positions 67 and 69 each coordinate CTP. N-linked (GlcNAc...) asparagine glycans are attached at residues Asn75, Asn110, Asn131, Asn153, and Asn184. Intrachain disulfides connect Cys116–Cys165, Cys126–Cys149, and Cys132–Cys159. Residues Thr186 and Leu188 each contribute to the ATP site. Thr186 contributes to the CTP binding site. Asn199 and Asn208 each carry an N-linked (GlcNAc...) asparagine glycan. Intrachain disulfides connect Cys217–Cys227 and Cys261–Cys270. Residues Asn293, Arg295, and Lys313 each contribute to the ATP site. Positions 293, 295, and 313 each coordinate CTP. Residues 339–359 (IGSGLALLGVATVLCDVIVLY) form a helical membrane-spanning segment. At 360–388 (CMKKRYYYREKKYKYVEDYEQGLGNQMEQ) the chain is on the cytoplasmic side.

Belongs to the P2X receptor family. In terms of assembly, functional P2RXs are organized as homomeric and heteromeric trimers. Forms heterotrimer with P2RX1. Interacts with P2RX7 (via C-terminus); this interaction is functional only in the presence of ATP. Forms heterotrimer with P2RX4; functional differences between homomeric P2RX4 and P2RX4/6 heterotrimer are minor. Interacts with AP1M2.

The protein localises to the cell membrane. It is found in the lysosome membrane. The catalysed reaction is K(+)(in) = K(+)(out). The enzyme catalyses Na(+)(in) = Na(+)(out). It catalyses the reaction Ca(2+)(in) = Ca(2+)(out). With respect to regulation, activated by ATP. pH-dependent and inhibited by acidic pH. In terms of biological role, ATP-gated nonselective transmembrane cation channel permeable to potassium, sodium and calcium. CTP, but not GTP or UTP, functions as a weak affinity agonist for P2RX4. Activated by extracellularly released ATP, it plays multiple role in immunity and central nervous system physiology. Could also function as an ATP-gated cation channel of lysosomal membranes. The protein is P2X purinoceptor 4 (P2RX4) of Bos taurus (Bovine).